We begin with the raw amino-acid sequence, 121 residues long: Small ribosomal subunit protein uS13 (121 aa).

The tract at residues Gly-94 to Lys-121 is disordered. Positions Ser-106–Lys-121 are enriched in basic residues.

The protein belongs to the universal ribosomal protein uS13 family. Part of the 30S ribosomal subunit. Forms a loose heterodimer with protein S19. Forms two bridges to the 50S subunit in the 70S ribosome.

Its function is as follows. Located at the top of the head of the 30S subunit, it contacts several helices of the 16S rRNA. In the 70S ribosome it contacts the 23S rRNA (bridge B1a) and protein L5 of the 50S subunit (bridge B1b), connecting the 2 subunits; these bridges are implicated in subunit movement. Contacts the tRNAs in the A and P-sites. This is Small ribosomal subunit protein uS13 from Exiguobacterium sibiricum (strain DSM 17290 / CCUG 55495 / CIP 109462 / JCM 13490 / 255-15).